The chain runs to 434 residues: MEKMESTEEWEALLSSSSNGDELTMKLIRNGLAKGFKSQKAAGDAGLYSRFLPYHFTESVSNDSFSSLPWQIFANSVAGNSPLQNEAWAFLMDNEDFFLPVPMNPAQCTALEIALWSLIRVDDQRLFELCHSKSGIRLLSIIFDFDSHPDWLREDVMFNIAERILKSNFPNVLVNVASKIGPKSIYFLIDCMSHKIKLKETATGFYVILDVLSCVGRQFASVLEECFTKEISSAGLDHINHFSEIVMLGVDLLYRDYVSYDTTISLKNDDSSSLGDMEFETSQPSSSISEIIHLLAVLDKRIPKKTLVEKTYASSMELQELYNAVVGVKRECVRFIAFICSKFSTAPDLVRHFNGVALIISQANYDDWNPYIREISVLCTRLLLQNNIENQKIIGGLTPITTTHSDALEEAGFTSYINDKGKVVLQPKTAKNSH.

This sequence belongs to the ataxin-10 family.

The protein resides in the cytoplasm. The protein localises to the nucleus. May play a role in the regulation of cytokinesis. The protein is Ataxin-10 homolog (mug160) of Schizosaccharomyces pombe (strain 972 / ATCC 24843) (Fission yeast).